The following is a 324-amino-acid chain: Beta-ketoacyl-[acyl-carrier-protein] synthase III (324 aa).

Residues cysteine 116 and histidine 251 contribute to the active site. An ACP-binding region spans residues 252–256; sequence QANLR. The active site involves asparagine 281.

This sequence belongs to the thiolase-like superfamily. FabH family. Homodimer.

The protein localises to the cytoplasm. It carries out the reaction malonyl-[ACP] + acetyl-CoA + H(+) = 3-oxobutanoyl-[ACP] + CO2 + CoA. It participates in lipid metabolism; fatty acid biosynthesis. Catalyzes the condensation reaction of fatty acid synthesis by the addition to an acyl acceptor of two carbons from malonyl-ACP. Catalyzes the first condensation reaction which initiates fatty acid synthesis and may therefore play a role in governing the total rate of fatty acid production. Possesses both acetoacetyl-ACP synthase and acetyl transacylase activities. Its substrate specificity determines the biosynthesis of branched-chain and/or straight-chain of fatty acids. This Xylella fastidiosa (strain Temecula1 / ATCC 700964) protein is Beta-ketoacyl-[acyl-carrier-protein] synthase III.